The chain runs to 185 residues: Ribosome-recycling factor (185 aa).

Belongs to the RRF family.

Its subcellular location is the cytoplasm. Its function is as follows. Responsible for the release of ribosomes from messenger RNA at the termination of protein biosynthesis. May increase the efficiency of translation by recycling ribosomes from one round of translation to another. This chain is Ribosome-recycling factor, found in Pectobacterium atrosepticum (strain SCRI 1043 / ATCC BAA-672) (Erwinia carotovora subsp. atroseptica).